The sequence spans 83 residues: Small ribosomal subunit protein uS17 (83 aa).

The protein belongs to the universal ribosomal protein uS17 family. As to quaternary structure, part of the 30S ribosomal subunit.

One of the primary rRNA binding proteins, it binds specifically to the 5'-end of 16S ribosomal RNA. In Zymomonas mobilis subsp. mobilis (strain ATCC 31821 / ZM4 / CP4), this protein is Small ribosomal subunit protein uS17.